We begin with the raw amino-acid sequence, 587 residues long: FAD-dependent monooxygenase ankC (587 aa).

The chain crosses the membrane as a helical span at residues alanine 7–alanine 27. Residues tyrosine 245 and aspartate 311 each coordinate FAD.

It belongs to the PheA/TfdB FAD monooxygenase family. In terms of assembly, homodimer. FAD serves as cofactor.

It localises to the membrane. The enzyme catalyses cyclo(L-arginyl-L-dehydrotyrosyl) + AH2 + O2 = cyclo(L-arginyl-(Z)-dehydro-3,4-dihydroxytyrosyl) + A + H2O. Its pathway is secondary metabolite biosynthesis. FAD-dependent monooxygenase; part of the ank cluster that mediates the biosynthesis of NK13650 C, a highly modified cyclo-arginine-tyrosine dipeptide. AnkC uses as substrate the dehydro-cyclodipeptide intermediate generated by the monooxygase ankB and acts as a hydroxylase that installs the m-OH through a canonical flavin-dependent aromatic hydroxylation mechanism. Within the pathway, the cyclodipeptide synthase ankA acts as the scaffold-generating enzyme and is responsible for formation of the cyclo-Arg-Tyr diketopiperazine (cRY) from L-Arg and L-Tyr. The ankA product cRY is desaturated by the cytochrome P450 monooxygenase ankB to yield a dehydro-cyclodipeptide intermediate. The FAD-dependent monooxygenase ankC then installs the m-OH, ankD catalyzes the attachment of L-homoserine, and ankE ligates citrate to the ankD product to yield NK13650 B. The O-methyltransferase ankF is responsible for methylation of the C-17 phenol group of NK13650 B to produce NK13650 D. Amidation of NK13650 D with L-Asp by ankG then leads to the production of NK13650 C, whereas amidation of NK13650 B produces NK13650 A. The chain is FAD-dependent monooxygenase ankC from Aspergillus thermomutatus (Neosartorya pseudofischeri).